Here is a 487-residue protein sequence, read N- to C-terminus: Betaine aldehyde dehydrogenase (487 aa).

K(+) contacts are provided by I27 and D93. Residue 149–151 (GAW) participates in NAD(+) binding. K161 (charge relay system) is an active-site residue. Residues 175 to 178 (KPSE) and 228 to 231 (SVPT) contribute to the NAD(+) site. A K(+)-binding site is contributed by L243. The active-site Proton acceptor is E249. Positions 251, 283, and 384 each coordinate NAD(+). The active-site Nucleophile is C283. A Cysteine sulfenic acid (-SOH) modification is found at C283. Residues K454 and G457 each contribute to the K(+) site. E461 acts as the Charge relay system in catalysis.

Belongs to the aldehyde dehydrogenase family. In terms of assembly, dimer of dimers. The cofactor is K(+).

The enzyme catalyses betaine aldehyde + NAD(+) + H2O = glycine betaine + NADH + 2 H(+). The protein operates within amine and polyamine biosynthesis; betaine biosynthesis via choline pathway; betaine from betaine aldehyde: step 1/1. Its function is as follows. Involved in the biosynthesis of the osmoprotectant glycine betaine. Catalyzes the irreversible oxidation of betaine aldehyde to the corresponding acid. The chain is Betaine aldehyde dehydrogenase from Brucella canis (strain ATCC 23365 / NCTC 10854 / RM-666).